Reading from the N-terminus, the 497-residue chain is Probable malate:quinone oxidoreductase (497 aa).

The protein belongs to the MQO family. Requires FAD as cofactor.

The enzyme catalyses (S)-malate + a quinone = a quinol + oxaloacetate. It participates in carbohydrate metabolism; tricarboxylic acid cycle; oxaloacetate from (S)-malate (quinone route): step 1/1. The chain is Probable malate:quinone oxidoreductase from Bacillus cereus (strain ATCC 14579 / DSM 31 / CCUG 7414 / JCM 2152 / NBRC 15305 / NCIMB 9373 / NCTC 2599 / NRRL B-3711).